We begin with the raw amino-acid sequence, 1328 residues long: Protein turtle homolog B (1328 aa).

An N-terminal signal peptide occupies residues 1–20 (MIWYVATLIASVISTRGLVA). Topologically, residues 21-722 (QVAHGLREEP…DLTDDGLARP (702 aa)) are extracellular. 5 Ig-like domains span residues 30 to 115 (PEFV…ECKV), 139 to 226 (PTFT…LLVQ), 228 to 320 (PPFI…AYLT), 324 to 415 (PARV…ARLV), and 420 to 504 (PYFT…THLT). 2 disulfides stabilise this stretch: Cys45-Cys113 and Cys161-Cys208. N-linked (GlcNAc...) asparagine glycans are attached at residues Asn241 and Asn258. 3 disulfides stabilise this stretch: Cys250–Cys303, Cys346–Cys397, and Cys442–Cys488. Fibronectin type-III domains lie at 512–604 (APGS…TLAF) and 614–708 (LVTP…STDI). N-linked (GlcNAc...) asparagine glycosylation occurs at Asn624. Residues 723-743 (VLAGIVATICFLAAAILFSTL) form a helical membrane-spanning segment. Residues 744 to 1328 (AACFVNKQRK…EPPTTLPTSG (585 aa)) are Cytoplasmic-facing. 3 disordered regions span residues 758–817 (RKKD…EKEL), 914–1040 (PMSS…PEPW), and 1107–1328 (SPGR…PTSG). A phosphoserine mark is found at Ser775, Ser783, and Ser794. Low complexity predominate over residues 990–1001 (SPLSSVMSSPPL). Polar residues-rich tracts occupy residues 1018-1033 (ENAS…TPTG), 1129-1141 (LVSQ…TSQG), and 1199-1214 (SRLS…SRTG). Arg1136 carries the omega-N-methylarginine modification. Phosphoserine is present on residues Ser1207 and Ser1215. A compositionally biased stretch (low complexity) spans 1246-1273 (SFSRKSTPSSTGSPSQSSRSGSPSYRPT). 2 stretches are compositionally biased toward pro residues: residues 1284-1295 (PSPPPGPAPPAP) and 1318-1328 (PEPPTTLPTSG).

This sequence belongs to the immunoglobulin superfamily. Turtle family. In terms of assembly, found in a complex with MAGI2 and NLGN2, where it interacts with MAGI2 (via PDZ 5 and PDZ 6 domains). Post-translationally, N-glycosylated and sialylated. Not significantly O-glycosylated. As to expression, detected primarily in brain, including cortex, hippocampus, cerebellum and striatum. Largely restricted to inhibitory GABAergic interneurons (at protein level).

The protein localises to the postsynaptic cell membrane. It is found in the postsynaptic density. Its function is as follows. Transmembrane protein which is abundantly expressed in interneurons, where it may regulate inhibitory synapse development. May mediate homophilic cell adhesion. This Rattus norvegicus (Rat) protein is Protein turtle homolog B.